The following is a 324-amino-acid chain: MGVHILSTGSSVPNFSVENQQFEDMIETSDHWISTRTGIKKRHLAPSSTSLTKLAAEAANKALYAANLKPTEISLIILATSTPDDLFGSASQLQAEIGATTPVAFDITAACSGFIVALVTAAQFIQLVYDNILVVGADTCLDGLIGQIELPVFYLVMVLEQLVLGQSLKNSILGFKLCTDGQLNSHLQLMNKPVNNQKFGGTEIPHGNYNSITMNGKEVYKFAVFQVPTVIRQCLNNLNISIDEVDWFILHQANTRIIEAIASRLSVPFSKMITNLEHYGNTSAASIPLALDEAIQSNKIQPGQIIVLSGFGAGLTWGAIVLKW.

Residues cysteine 111 and histidine 251 contribute to the active site. The ACP-binding stretch occupies residues 252 to 256 (QANTR). The active site involves asparagine 281.

The protein belongs to the thiolase-like superfamily. FabH family. As to quaternary structure, homodimer.

It localises to the plastid. Its subcellular location is the chloroplast. The enzyme catalyses malonyl-[ACP] + acetyl-CoA + H(+) = 3-oxobutanoyl-[ACP] + CO2 + CoA. It functions in the pathway lipid metabolism; fatty acid biosynthesis. Functionally, catalyzes the condensation reaction of fatty acid synthesis by the addition to an acyl acceptor of two carbons from malonyl-ACP. Catalyzes the first condensation reaction which initiates fatty acid synthesis and may therefore play a role in governing the total rate of fatty acid production. Possesses both acetoacetyl-ACP synthase and acetyl transacylase activities. Its substrate specificity determines the biosynthesis of branched-chain and/or straight-chain of fatty acids. The protein is Beta-ketoacyl-[acyl-carrier-protein] synthase III of Pyropia yezoensis (Susabi-nori).